A 1231-amino-acid chain; its full sequence is Multifunctional 2-oxoglutarate metabolism enzyme (1231 aa).

Positions 1 to 41 are 2-oxoglutarate dehydrogenase E1, N-terminal part; sequence MANISSPFGQNEWLVEAMYRKFRDDPSSVDPSWHEFLVDYS. Positions 24-37 are enriched in basic and acidic residues; that stretch reads DDPSSVDPSWHEFL. The interval 24-56 is disordered; the sequence is DDPSSVDPSWHEFLVDYSPEPTSQPAAEPTRVT. The interval 42–88 is linker; the sequence is PEPTSQPAAEPTRVTSPLVAERAAAAAPQAPPKPADTAAAGNGVVAA. The interval 89 to 337 is succinyltransferase E2; the sequence is LAAKTAVPPP…LRTIHELLLS (249 aa). His316 serves as the catalytic Proton acceptor; for succinyltransferase activity. A 2-oxoglutarate dehydrogenase E1, C-terminal part region spans residues 338–1231; that stretch reads DGFWDEVFRE…QQEILDEAFG (894 aa). Arg542 contacts thiamine diphosphate. Residues His581 and Ser606 each coordinate 2-oxoglutarate. Thiamine diphosphate contacts are provided by Ser606, Leu608, Asp649, Ala650, Ala651, and Asn682. A Mg(2+)-binding site is contributed by Asp649. Mg(2+) is bound by residues Asn682 and Ile684. Positions 787 to 817 form a coiled coil; the sequence is DISMKEAEDALRDYQGQLERVFNEVRELEKH. His1024 is a binding site for 2-oxoglutarate. 7 residues coordinate acetyl-CoA: Thr1042, Arg1058, Lys1093, Ser1096, Gln1146, Arg1153, and Arg1154.

Belongs to the 2-oxoacid dehydrogenase family. Kgd subfamily. Homodimer. The 2-oxoglutarate dehydrogenase (ODH) complex contains multiple copies of three enzymatic components: 2-oxoglutarate dehydrogenase (E1), dihydrolipoamide succinyltransferase (E2) and lipoamide dehydrogenase (E3). Mg(2+) is required as a cofactor. The cofactor is thiamine diphosphate.

It carries out the reaction glyoxylate + 2-oxoglutarate + H(+) = 2-hydroxy-3-oxoadipate + CO2. It catalyses the reaction 2-oxoglutarate + H(+) = succinate semialdehyde + CO2. The enzyme catalyses N(6)-[(R)-lipoyl]-L-lysyl-[protein] + 2-oxoglutarate + H(+) = N(6)-[(R)-S(8)-succinyldihydrolipoyl]-L-lysyl-[protein] + CO2. The catalysed reaction is N(6)-[(R)-dihydrolipoyl]-L-lysyl-[protein] + succinyl-CoA = N(6)-[(R)-S(8)-succinyldihydrolipoyl]-L-lysyl-[protein] + CoA. It participates in carbohydrate metabolism; tricarboxylic acid cycle; succinate from 2-oxoglutarate (transferase route): step 1/2. Its pathway is carbohydrate metabolism; tricarboxylic acid cycle; succinyl-CoA from 2-oxoglutarate (dehydrogenase route): step 1/1. Its activity is regulated as follows. Alpha-ketoglutarate dehydrogenase and decarboxylase activities are inhibited by unphosphorylated GarA, and allosterically activated by acetyl-CoA, the main substrate of the TCA cycle. Its function is as follows. Shows three enzymatic activities that share a first common step, the attack of thiamine-PP on 2-oxoglutarate (alpha-ketoglutarate, KG), leading to the formation of an enamine-thiamine-PP intermediate upon decarboxylation. Thus, displays KGD activity, catalyzing the decarboxylation from five-carbon 2-oxoglutarate to four-carbon succinate semialdehyde (SSA). Also catalyzes C-C bond formation between the activated aldehyde formed after decarboxylation of alpha-ketoglutarate and the carbonyl of glyoxylate (GLX), to yield 2-hydroxy-3-oxoadipate (HOA), which spontaneously decarboxylates to form 5-hydroxylevulinate (HLA). And is also a component of the 2-oxoglutarate dehydrogenase (ODH) complex, that catalyzes the overall conversion of 2-oxoglutarate to succinyl-CoA and CO(2). The KG decarboxylase and KG dehydrogenase reactions provide two alternative, tightly regulated, pathways connecting the oxidative and reductive branches of the TCA cycle. This Mycobacterium bovis (strain ATCC BAA-935 / AF2122/97) protein is Multifunctional 2-oxoglutarate metabolism enzyme (kgd).